Reading from the N-terminus, the 157-residue chain is Histidine-containing phosphotransfer protein 5 (157 aa).

Methionine 1 carries the post-translational modification N-acetylmethionine. Residues 41–148 form the HPt domain; the sequence is TPDFVAEVVS…NLEKQILQAG (108 aa). Histidine 83 bears the Phosphohistidine mark.

Interacts with the B-type response regulators ARR1 and ARR2. Binds to AHK2, AHK3, AHK4 and AHK5. Post-translationally, two-component system major event consists of a His-to-Asp phosphorelay between a sensor histidine kinase (HK) and a response regulator (RR). In plants, the His-to-Asp phosphorelay involves an additional intermediate named Histidine-containing phosphotransfer protein (HPt). This multistep phosphorelay consists of a His-Asp-His-Asp sequential transfer of a phosphate group between first a His and an Asp of the HK protein, followed by the transfer to a conserved His of the HPt protein and finally the transfer to an Asp in the receiver domain of the RR protein. In terms of tissue distribution, expressed in the whole plant.

It is found in the cytoplasm. Its subcellular location is the cytosol. The protein localises to the nucleus. In terms of biological role, functions as a two-component phosphorelay mediator between cytokinin sensor histidine kinases and response regulators (B-type ARRs). Plays an important role in propagating cytokinin signal transduction through the multistep His-to-Asp phosphorelay. This is Histidine-containing phosphotransfer protein 5 (AHP5) from Arabidopsis thaliana (Mouse-ear cress).